The chain runs to 418 residues: Queuine tRNA-ribosyltransferase accessory subunit 2 (418 aa).

Positions 325, 327, 330, and 356 each coordinate Zn(2+).

This sequence belongs to the queuine tRNA-ribosyltransferase family. QTRT2 subfamily. As to quaternary structure, heterodimer of a catalytic subunit and an accessory subunit. Zn(2+) serves as cofactor.

The protein resides in the cytoplasm. In terms of biological role, non-catalytic subunit of the queuine tRNA-ribosyltransferase (TGT) that catalyzes the base-exchange of a guanine (G) residue with queuine (Q) at position 34 (anticodon wobble position) in tRNAs with GU(N) anticodons (tRNA-Asp, -Asn, -His and -Tyr), resulting in the hypermodified nucleoside queuosine (7-(((4,5-cis-dihydroxy-2-cyclopenten-1-yl)amino)methyl)-7-deazaguanosine). In Drosophila yakuba (Fruit fly), this protein is Queuine tRNA-ribosyltransferase accessory subunit 2.